A 146-amino-acid chain; its full sequence is Hemoglobin subunit beta (146 aa).

The 145-residue stretch at 2–146 folds into the Globin domain; the sequence is HWTAEEKQLI…VAHALARKYH (145 aa). Heme b contacts are provided by His-63 and His-92.

This sequence belongs to the globin family. In terms of assembly, heterotetramer of two alpha chains and two beta chains. Red blood cells.

In terms of biological role, involved in oxygen transport from the lung to the various peripheral tissues. This is Hemoglobin subunit beta (HBB) from Branta canadensis (Canada goose).